We begin with the raw amino-acid sequence, 495 residues long: ATP synthase subunit alpha, chloroplastic (495 aa).

170-177 (GDRQTGKT) serves as a coordination point for ATP.

This sequence belongs to the ATPase alpha/beta chains family. F-type ATPases have 2 components, CF(1) - the catalytic core - and CF(0) - the membrane proton channel. CF(1) has five subunits: alpha(3), beta(3), gamma(1), delta(1), epsilon(1). CF(0) has four main subunits: a, b, b' and c.

The protein localises to the plastid. The protein resides in the chloroplast thylakoid membrane. The enzyme catalyses ATP + H2O + 4 H(+)(in) = ADP + phosphate + 5 H(+)(out). Produces ATP from ADP in the presence of a proton gradient across the membrane. The alpha chain is a regulatory subunit. The sequence is that of ATP synthase subunit alpha, chloroplastic from Cyanidioschyzon merolae (strain NIES-3377 / 10D) (Unicellular red alga).